The primary structure comprises 404 residues: RNA exonuclease 3 (404 aa).

The Exonuclease domain maps to 243 to 389 (VLSLDCEMAF…QDAIATMDVV (147 aa)).

This sequence belongs to the REXO1/REXO3 family.

It is found in the cytoplasm. The protein resides in the nucleus. In terms of biological role, 3' to 5' exoribonuclease required for proper 3' end maturation of MRP RNA and of the U5L snRNA. In Saccharomyces cerevisiae (strain ATCC 204508 / S288c) (Baker's yeast), this protein is RNA exonuclease 3 (REX3).